The following is a 1203-amino-acid chain: Zinc finger and BTB domain-containing protein 38 (1203 aa).

A BTB domain is found at cysteine 33–arginine 100. Lysine 43 is covalently cross-linked (Glycyl lysine isopeptide (Lys-Gly) (interchain with G-Cter in SUMO2)). Serine 130 bears the Phosphoserine mark. Glycyl lysine isopeptide (Lys-Gly) (interchain with G-Cter in SUMO2) cross-links involve residues lysine 145, lysine 148, lysine 151, and lysine 260. Residues glutamate 230–alanine 334 form a disordered region. Residues threonine 269–asparagine 280 show a composition bias toward polar residues. An interaction with CBFA2T3 region spans residues proline 299–glutamate 522. The span at glycine 313 to glutamate 322 shows a compositional bias: basic and acidic residues. The C2H2-type 1 zinc finger occupies tyrosine 341 to histidine 363. Residues phenylalanine 370–arginine 394 form a C2H2-type 2; degenerate zinc finger. 3 C2H2-type zinc fingers span residues tyrosine 459–histidine 481, tyrosine 487–histidine 509, and tyrosine 515–histidine 538. Glycyl lysine isopeptide (Lys-Gly) (interchain with G-Cter in SUMO2) cross-links involve residues lysine 549 and lysine 556. Composition is skewed to polar residues over residues arginine 581–proline 598, leucine 607–proline 628, proline 635–alanine 644, and serine 731–alanine 741. Disordered regions lie at residues arginine 581–alanine 644 and serine 731–asparagine 776. Basic and acidic residues predominate over residues lysine 747–serine 757. Glycyl lysine isopeptide (Lys-Gly) (interchain with G-Cter in SUMO2) cross-links involve residues lysine 750, lysine 755, lysine 796, lysine 806, lysine 813, lysine 834, lysine 842, and lysine 849. 2 disordered regions span residues lysine 857–glycine 882 and phenylalanine 895–tyrosine 914. Residues threonine 866 to glycine 877 are compositionally biased toward basic and acidic residues. Glycyl lysine isopeptide (Lys-Gly) (interchain with G-Cter in SUMO2) cross-links involve residues lysine 915, lysine 971, lysine 976, lysine 984, lysine 988, lysine 998, lysine 1024, and lysine 1033. 5 consecutive C2H2-type zinc fingers follow at residues tyrosine 1017–histidine 1039, tyrosine 1045–histidine 1067, phenylalanine 1073–histidine 1095, tyrosine 1101–histidine 1123, and phenylalanine 1132–histidine 1154. Glycyl lysine isopeptide (Lys-Gly) (interchain with G-Cter in SUMO2) cross-links involve residues lysine 1116, lysine 1139, lysine 1142, lysine 1157, and lysine 1190. The segment at asparagine 1172–glutamate 1203 is disordered.

Interacts with CBFA2T3, ZBTB4 and RBBP6. In terms of processing, ubiquitinated by RBBP6; leading to its degradation by the proteasome. In terms of tissue distribution, widely expressed throughout the adult brain where it is found mainly in neurons. Also expressed in the adrenal medulla. Not detected in non-neural tissues including heart, spleen, liver and muscle. In the embryo, expressed in the developing brain and spinal cord but not in the migratory neural crest. Also expressed in the limbs, transiently in somites, and in the embryonic liver. In the embryonic neural tube, expression is restricted to late postmitotic neurons.

Its subcellular location is the nucleus. The protein resides in the chromosome. Functionally, transcriptional regulator with bimodal DNA-binding specificity. Binds with a higher affinity to methylated CpG dinucleotides in the consensus sequence 5'-CGCG-3' but can also bind to E-box elements (5'-CACGTG-3'). Can also bind specifically to a single methyl-CpG pair. Represses transcription in a methyl-CpG-dependent manner. Plays an important role in regulating DNA-replication and common fragile sites (CFS) stability in a RBBP6- and MCM10-dependent manner; represses expression of MCM10 which plays an important role in DNA-replication. Acts as a transcriptional activator. May be involved in the differentiation and/or survival of late postmitotic neurons. This is Zinc finger and BTB domain-containing protein 38 from Rattus norvegicus (Rat).